Consider the following 494-residue polypeptide: Acetyl-coenzyme A carboxylase carboxyl transferase subunit beta, chloroplastic (494 aa).

The region spanning 230 to 494 is the CoA carboxyltransferase N-terminal domain; the sequence is LWVQCENCYG…LHGFFPLNQN (265 aa). Residues Cys234, Cys237, Cys253, and Cys256 each contribute to the Zn(2+) site. Residues 234–256 form a C4-type zinc finger; sequence CENCYGLNYKKFFRSKMNICEQC.

It belongs to the AccD/PCCB family. As to quaternary structure, acetyl-CoA carboxylase is a heterohexamer composed of biotin carboxyl carrier protein, biotin carboxylase and 2 subunits each of ACCase subunit alpha and ACCase plastid-coded subunit beta (accD). Zn(2+) is required as a cofactor.

It localises to the plastid. The protein localises to the chloroplast stroma. It carries out the reaction N(6)-carboxybiotinyl-L-lysyl-[protein] + acetyl-CoA = N(6)-biotinyl-L-lysyl-[protein] + malonyl-CoA. Its pathway is lipid metabolism; malonyl-CoA biosynthesis; malonyl-CoA from acetyl-CoA: step 1/1. In terms of biological role, component of the acetyl coenzyme A carboxylase (ACC) complex. Biotin carboxylase (BC) catalyzes the carboxylation of biotin on its carrier protein (BCCP) and then the CO(2) group is transferred by the transcarboxylase to acetyl-CoA to form malonyl-CoA. This chain is Acetyl-coenzyme A carboxylase carboxyl transferase subunit beta, chloroplastic, found in Drimys granadensis.